A 319-amino-acid chain; its full sequence is ATP-dependent 6-phosphofructokinase (319 aa).

Residue Gly11 coordinates ATP. Position 21 to 25 (Arg21 to Arg25) interacts with ADP. Residues Arg72–Cys73 and Gly102–Ser105 each bind ATP. A Mg(2+)-binding site is contributed by Asp103. Thr125–Asp127 lines the substrate pocket. The active-site Proton acceptor is Asp127. Residue Arg154 coordinates ADP. Substrate-binding positions include Arg162 and Met169–Arg171. Residues Gly185 to Glu187, Arg211, and Lys213 to His215 each bind ADP. Substrate is bound by residues Glu222, Arg243, and His249 to Arg252.

Belongs to the phosphofructokinase type A (PFKA) family. ATP-dependent PFK group I subfamily. Prokaryotic clade 'B1' sub-subfamily. In terms of assembly, homotetramer. It depends on Mg(2+) as a cofactor.

Its subcellular location is the cytoplasm. The catalysed reaction is beta-D-fructose 6-phosphate + ATP = beta-D-fructose 1,6-bisphosphate + ADP + H(+). It participates in carbohydrate degradation; glycolysis; D-glyceraldehyde 3-phosphate and glycerone phosphate from D-glucose: step 3/4. Its activity is regulated as follows. Allosterically activated by ADP and other diphosphonucleosides, and allosterically inhibited by phosphoenolpyruvate. Functionally, catalyzes the phosphorylation of D-fructose 6-phosphate to fructose 1,6-bisphosphate by ATP, the first committing step of glycolysis. The chain is ATP-dependent 6-phosphofructokinase from Bacillus pumilus (strain SAFR-032).